A 466-amino-acid chain; its full sequence is Phytase A (466 aa).

An N-terminal signal peptide occupies residues 1-19 (MGFLAIVLSVALLFRSTSG). Cys-31 and Cys-40 are joined by a disulfide. 1D-myo-inositol hexakisphosphate is bound by residues Tyr-51, Arg-81, His-82, Arg-85, and Thr-88. 4 cysteine pairs are disulfide-bonded: Cys-71/Cys-414, Cys-215/Cys-465, Cys-264/Cys-282, and Cys-436/Cys-444. Residue His-82 is the Nucleophile of the active site. Asn-120 carries N-linked (GlcNAc...) asparagine glycosylation. Residue Arg-165 coordinates 1D-myo-inositol hexakisphosphate. Residues Asn-207 and Asn-230 are each glycosylated (N-linked (GlcNAc...) asparagine). Lys-301 provides a ligand contact to 1D-myo-inositol hexakisphosphate. N-linked (GlcNAc...) asparagine glycosylation is found at Asn-339 and Asn-352. Residues His-361 and Asp-362 each coordinate 1D-myo-inositol hexakisphosphate. Asn-376 is a glycosylation site (N-linked (GlcNAc...) asparagine).

It belongs to the histidine acid phosphatase family. Monomer.

It is found in the secreted. The catalysed reaction is 1D-myo-inositol hexakisphosphate + H2O = 1D-myo-inositol 1,2,4,5,6-pentakisphosphate + phosphate. It catalyses the reaction 1D-myo-inositol 1,2,4,5,6-pentakisphosphate + H2O = 1D-myo-inositol 1,2,5,6-tetrakisphosphate + phosphate. The enzyme catalyses 1D-myo-inositol 1,2,5,6-tetrakisphosphate + H2O = 1D-myo-inositol 1,2,6-trisphosphate + phosphate. It carries out the reaction 1D-myo-inositol 1,2,6-trisphosphate + H2O = 1D-myo-inositol 1,2-bisphosphate + phosphate. The catalysed reaction is 1D-myo-inositol 1,2-bisphosphate + H2O = 1D-myo-inositol 2-phosphate + phosphate. Its function is as follows. Catalyzes the phosphate monoester hydrolysis of phytic acid (myo-inositol hexakisphosphate), which results in the stepwise formation of myo-inositol pentakis-, tetrakis-, tris-, bis-, and monophosphates, as well as the liberation of inorganic phosphate. Myo-inositol 2-monophosphate is the end product. Has a broad substrate specificity and is also able to dephosphorylate other classic acid phosphatase substrates such as p-nitrophenyl phosphate, phenyl phosphate, fructose 1,6-bisphosphate, glucose 6-phosphate, 3-phosphoglycerate, as well as ADP and ATP. The sequence is that of Phytase A from Aspergillus terreus.